The chain runs to 257 residues: Leucine-rich repeat-containing protein 3 (257 aa).

The N-terminal stretch at 1–32 (MGPRGRQSPSSPLAPSQGSCFFILFCLRLGAS) is a signal peptide. Positions 33-64 (CPQSCQCPDHAGAVAVHCSSRGLQEIPRDIPA) constitute an LRRNT domain. LRR repeat units lie at residues 65–86 (NTVLLKLDANRISRVPNGAFQH), 89–110 (QLRELDLSHNAIEAIGPAAFSG), and 114–135 (GLRLLDLSHNRIRRIPKDALGK). In terms of domain architecture, LRRCT spans 145 to 198 (NPLHCECALQEALWELKLDPDSVDEIACHTSAQEQFVGKPLIQVLDSGASFCST). Residues 205 to 225 (VAMLVTMFGWFTMVIAYVVYY) form a helical membrane-spanning segment.

It belongs to the LRRC3 family.

It localises to the membrane. This chain is Leucine-rich repeat-containing protein 3 (Lrrc3), found in Rattus norvegicus (Rat).